The chain runs to 445 residues: tRNA modification GTPase MnmE (445 aa).

(6S)-5-formyl-5,6,7,8-tetrahydrofolate-binding residues include R20, E79, and K119. Positions 215-371 constitute a TrmE-type G domain; it reads GLKLAIIGPP…ILKNIENIAE (157 aa). N225 lines the K(+) pocket. GTP is bound by residues 225-230, 244-250, and 269-272; these read NVGKSS, SNIAGTT, and DTAG. S229 is a Mg(2+) binding site. Residues S244, I246, and T249 each contribute to the K(+) site. T250 lines the Mg(2+) pocket. Residue K445 coordinates (6S)-5-formyl-5,6,7,8-tetrahydrofolate.

Belongs to the TRAFAC class TrmE-Era-EngA-EngB-Septin-like GTPase superfamily. TrmE GTPase family. As to quaternary structure, homodimer. Heterotetramer of two MnmE and two MnmG subunits. Requires K(+) as cofactor.

Its subcellular location is the cytoplasm. In terms of biological role, exhibits a very high intrinsic GTPase hydrolysis rate. Involved in the addition of a carboxymethylaminomethyl (cmnm) group at the wobble position (U34) of certain tRNAs, forming tRNA-cmnm(5)s(2)U34. The polypeptide is tRNA modification GTPase MnmE (Rickettsia conorii (strain ATCC VR-613 / Malish 7)).